The chain runs to 275 residues: Nitrogenase iron protein 1 (275 aa).

ATP is bound at residue 9–16 (GKGGIGKS). Cys-98 is a binding site for [4Fe-4S] cluster. Position 101 is an ADP-ribosylarginine; by dinitrogenase reductase ADP-ribosyltransferase (Arg-101). Cys-132 lines the [4Fe-4S] cluster pocket.

It belongs to the NifH/BchL/ChlL family. As to quaternary structure, homodimer. [4Fe-4S] cluster serves as cofactor. The reversible ADP-ribosylation of Arg-101 inactivates the nitrogenase reductase and regulates nitrogenase activity.

The catalysed reaction is N2 + 8 reduced [2Fe-2S]-[ferredoxin] + 16 ATP + 16 H2O = H2 + 8 oxidized [2Fe-2S]-[ferredoxin] + 2 NH4(+) + 16 ADP + 16 phosphate + 6 H(+). The key enzymatic reactions in nitrogen fixation are catalyzed by the nitrogenase complex, which has 2 components: the iron protein and the molybdenum-iron protein. The polypeptide is Nitrogenase iron protein 1 (nifH1) (Methanobacterium ivanovii).